The primary structure comprises 503 residues: Putative cytochrome P450 71A28 (503 aa).

Residues 1-21 (MILISLCFTTFLAFLFLNPLL) traverse the membrane as a helical segment. Cysteine 443 provides a ligand contact to heme.

It belongs to the cytochrome P450 family. It depends on heme as a cofactor.

It localises to the membrane. The protein is Putative cytochrome P450 71A28 (CYP71A28) of Arabidopsis thaliana (Mouse-ear cress).